The following is a 72-amino-acid chain: Translation initiation factor IF-1 (72 aa).

The 72-residue stretch at 1-72 folds into the S1-like domain; sequence MAKEKDTIRT…PTRGRIVYRK (72 aa).

It belongs to the IF-1 family. As to quaternary structure, component of the 30S ribosomal translation pre-initiation complex which assembles on the 30S ribosome in the order IF-2 and IF-3, IF-1 and N-formylmethionyl-tRNA(fMet); mRNA recruitment can occur at any time during PIC assembly.

The protein localises to the cytoplasm. One of the essential components for the initiation of protein synthesis. Stabilizes the binding of IF-2 and IF-3 on the 30S subunit to which N-formylmethionyl-tRNA(fMet) subsequently binds. Helps modulate mRNA selection, yielding the 30S pre-initiation complex (PIC). Upon addition of the 50S ribosomal subunit IF-1, IF-2 and IF-3 are released leaving the mature 70S translation initiation complex. This chain is Translation initiation factor IF-1, found in Thermus thermophilus (strain ATCC BAA-163 / DSM 7039 / HB27).